Reading from the N-terminus, the 454-residue chain is tRNA modification GTPase MnmE (454 aa).

(6S)-5-formyl-5,6,7,8-tetrahydrofolate contacts are provided by R23, E80, and K120. The TrmE-type G domain maps to 216–377 (GMKVVIAGKP…LRTHLKQSMG (162 aa)). N226 contacts K(+). GTP-binding positions include 226–231 (NAGKSS), 245–251 (TAIAGTT), 270–273 (DTAG), and 335–338 (NKAD). A Mg(2+)-binding site is contributed by S230. The K(+) site is built by T245, I247, and T250. T251 is a binding site for Mg(2+). (6S)-5-formyl-5,6,7,8-tetrahydrofolate is bound at residue K454.

It belongs to the TRAFAC class TrmE-Era-EngA-EngB-Septin-like GTPase superfamily. TrmE GTPase family. As to quaternary structure, homodimer. Heterotetramer of two MnmE and two MnmG subunits. K(+) is required as a cofactor.

It localises to the cytoplasm. In terms of biological role, exhibits a very high intrinsic GTPase hydrolysis rate. Involved in the addition of a carboxymethylaminomethyl (cmnm) group at the wobble position (U34) of certain tRNAs, forming tRNA-cmnm(5)s(2)U34. The chain is tRNA modification GTPase MnmE from Sodalis glossinidius (strain morsitans).